Reading from the N-terminus, the 487-residue chain is Glycogen synthase 1 (487 aa).

Lys15 contacts ADP-alpha-D-glucose.

It belongs to the glycosyltransferase 1 family. Bacterial/plant glycogen synthase subfamily.

The catalysed reaction is [(1-&gt;4)-alpha-D-glucosyl](n) + ADP-alpha-D-glucose = [(1-&gt;4)-alpha-D-glucosyl](n+1) + ADP + H(+). The protein operates within glycan biosynthesis; glycogen biosynthesis. Its function is as follows. Synthesizes alpha-1,4-glucan chains using ADP-glucose. In Nitrosococcus oceani (strain ATCC 19707 / BCRC 17464 / JCM 30415 / NCIMB 11848 / C-107), this protein is Glycogen synthase 1.